The sequence spans 432 residues: Nuclear pore complex-interacting protein family member B8 (432 aa).

2 disordered regions span residues 260 to 280 and 353 to 420; these read RMGRQPPPPTQQHSITDNSLS and SPLP…LRTR. Residues 270 to 280 are compositionally biased toward polar residues; that stretch reads QQHSITDNSLS. Residues 374–402 are compositionally biased toward basic and acidic residues; it reads EVEKPPKPKRWRVDEVEQSPKPKRQREAE. The segment covering 408–420 has biased composition (basic residues); the sequence is KPKRRRLSKLRTR.

The protein belongs to the NPIP family.

This is Nuclear pore complex-interacting protein family member B8 (NPIPB8) from Homo sapiens (Human).